Reading from the N-terminus, the 597-residue chain is Elongation factor 4 (597 aa).

The region spanning 2-184 (DHIRNFSIIA…ALIAKVPPPK (183 aa)) is the tr-type G domain. GTP is bound by residues 14 to 19 (DHGKST) and 131 to 134 (NKID).

Belongs to the TRAFAC class translation factor GTPase superfamily. Classic translation factor GTPase family. LepA subfamily.

Its subcellular location is the cell inner membrane. It carries out the reaction GTP + H2O = GDP + phosphate + H(+). Its function is as follows. Required for accurate and efficient protein synthesis under certain stress conditions. May act as a fidelity factor of the translation reaction, by catalyzing a one-codon backward translocation of tRNAs on improperly translocated ribosomes. Back-translocation proceeds from a post-translocation (POST) complex to a pre-translocation (PRE) complex, thus giving elongation factor G a second chance to translocate the tRNAs correctly. Binds to ribosomes in a GTP-dependent manner. The polypeptide is Elongation factor 4 (Cupriavidus pinatubonensis (strain JMP 134 / LMG 1197) (Cupriavidus necator (strain JMP 134))).